The following is a 212-amino-acid chain: Stem bromelain (212 aa).

2 disulfide bridges follow: C23-C63 and C57-C96. Residue C26 is part of the active site. The N-linked (GlcNAc...) asparagine glycan is linked to N117. The cysteines at positions 152 and 199 are disulfide-linked. H158 is an active-site residue.

Belongs to the peptidase C1 family.

The enzyme catalyses Broad specificity for cleavage of proteins, but strong preference for Z-Arg-Arg-|-NHMec among small molecule substrates.. In terms of biological role, cysteine proteinase with a high level of diversity in substrate specificity. The polypeptide is Stem bromelain (Ananas comosus (Pineapple)).